Reading from the N-terminus, the 831-residue chain is Translation initiation factor IF-2 (831 aa).

In terms of domain architecture, tr-type G spans 329–499 (TRAPVVTVMG…LLISEMQDLK (171 aa)). The interval 338 to 345 (GHVDHGKT) is G1. 338 to 345 (GHVDHGKT) is a GTP binding site. Residues 363–367 (GITQH) form a G2 region. The segment at 385-388 (DTPG) is G3. GTP-binding positions include 385–389 (DTPGH) and 439–442 (NKID). Residues 439–442 (NKID) are G4. A G5 region spans residues 475-477 (SAL).

This sequence belongs to the TRAFAC class translation factor GTPase superfamily. Classic translation factor GTPase family. IF-2 subfamily.

The protein localises to the cytoplasm. Functionally, one of the essential components for the initiation of protein synthesis. Protects formylmethionyl-tRNA from spontaneous hydrolysis and promotes its binding to the 30S ribosomal subunits. Also involved in the hydrolysis of GTP during the formation of the 70S ribosomal complex. This is Translation initiation factor IF-2 (infB) from Rickettsia prowazekii (strain Madrid E).